A 213-amino-acid chain; its full sequence is Probable transaldolase (213 aa).

The active-site Schiff-base intermediate with substrate is the Lys-83.

It belongs to the transaldolase family. Type 3B subfamily.

The protein localises to the cytoplasm. It catalyses the reaction D-sedoheptulose 7-phosphate + D-glyceraldehyde 3-phosphate = D-erythrose 4-phosphate + beta-D-fructose 6-phosphate. The protein operates within carbohydrate degradation; pentose phosphate pathway; D-glyceraldehyde 3-phosphate and beta-D-fructose 6-phosphate from D-ribose 5-phosphate and D-xylulose 5-phosphate (non-oxidative stage): step 2/3. Its function is as follows. Transaldolase is important for the balance of metabolites in the pentose-phosphate pathway. This is Probable transaldolase from Geobacillus kaustophilus (strain HTA426).